The sequence spans 789 residues: Tax1-binding protein 1 (789 aa).

Phosphoserine occurs at positions 124, 138, and 225. A coiled-coil region spans residues 144–599 (TTKAGLLELK…LKRSLENPAE (456 aa)). The interval 320 to 420 (EEIGRLQLCL…ELKLNAMKKD (101 aa)) is oligomerization. Polar residues predominate over residues 481-502 (TGNQQKVNDASVNTDPATSAST). Residues 481-508 (TGNQQKVNDASVNTDPATSASTVDVKPS) form a disordered region. Phosphoserine; by IKKA is present on Ser593. Position 609 is a phosphoserine (Ser609). Residues 639 to 660 (YASQETRDGADGAFYPDEIQRP) form a disordered region. Phosphoserine; by IKKA is present on Ser666. Residues 678-712 (PARNFSRPDGLEDSEDSKEDENVPTAPDPPSQHLR) form a disordered region. 2 UBZ1-type zinc fingers span residues 727–753 (HKKC…VESH) and 754–780 (WKVC…VQTH). Cys730, Cys733, His749, His753, Cys757, Cys760, His776, and His780 together coordinate Zn(2+).

As to quaternary structure, homooligomer. Interacts with TNFAIP3. Interacts with STARD13. Interacts with MYO6. Interacts with TOM1; the interaction is indirect and is mediated by MYO6, which acts as a bridge between TOM1 and TAX1BP1. Interacts with MAVS; this interaction induces MAVS polyubiquitination. Interacts with TNIP1. Interacts with TRAF6; this interaction mediates deubiquitination of TRAF6 and inhibition of NF-kappa-B activation. Interacts with RIPK1; this interaction negatively regulates RIPK1 ubiquitination. Interacts with NBR1. Interacts with TBK1. Interacts with RB1CC1. Interacts with SQSTM1. Interacts with AZI2. Interacts with TICAM1 and TRIM32; these interactions target TICAM1 to TAX1BP1-mediated selective autophagic degradation. (Microbial infection) Interacts with the HTLV-1 protein Tax. In terms of assembly, (Microbial infection) Interacts with Respiratory syncytial virus protein N; this interaction may promote viral growth by inhibiting the innate immune response. As to quaternary structure, (Microbial infection) Interacts with Lassa virus protein Z. (Microbial infection) Interacts with Mopeia virus protein Z. In terms of processing, phosphorylated in the C-terminal region by CHUK/IKKA leading to NF-kappa-B signaling down-regulation. In terms of tissue distribution, expressed in all tissues tested.

It localises to the cytoplasm. It is found in the mitochondrion. The protein resides in the preautophagosomal structure. Its subcellular location is the cytoplasmic vesicle. The protein localises to the autophagosome. In terms of biological role, ubiquitin-binding adapter that participates in inflammatory, antiviral and innate immune processes as well as selective autophagy regulation. Plays a key role in the negative regulation of NF-kappa-B and IRF3 signalings by acting as an adapter for the ubiquitin-editing enzyme A20/TNFAIP3 to bind and inactivate its substrates. Disrupts the interactions between the E3 ubiquitin ligase TRAF3 and TBK1/IKBKE to attenuate 'Lys63'-linked polyubiquitination of TBK1 and thereby IFN-beta production. Also recruits A20/TNFAIP3 to ubiquitinated signaling proteins TRAF6 and RIPK1, leading to their deubiquitination and disruption of IL-1 and TNF-induced NF-kappa-B signaling pathways. Inhibits virus-induced apoptosis by inducing the 'Lys-48'-linked polyubiquitination and degradation of MAVS via recruitment of the E3 ligase ITCH, thereby attenuating MAVS-mediated apoptosis signaling. As a macroautophagy/autophagy receptor, facilitates the xenophagic clearance of pathogenic bacteria such as Salmonella typhimurium and Mycobacterium tuberculosis. Upon NBR1 recruitment to the SQSTM1-ubiquitin condensates, acts as the major recruiter of RB1CC1 to these ubiquitin condensates to promote their autophagic degradation. Mediates the autophagic degradation of other substrates including TICAM1. This chain is Tax1-binding protein 1 (TAX1BP1), found in Homo sapiens (Human).